Consider the following 422-residue polypeptide: MSARAGIVVTGTEVLTGRVQDQNGPWLADRLLELGVELGHITLCGDRPADIEAQLRFLAGQGVDLIITSGGLGPTADDMTVEIVSRFCGRELVLDAAVEARIGEIVKGMMARFPGVDADAVLAANRKQALVPAGAVVLDPVGTAPGVVVAGSPTVVVLPGPPRELQPMWHAAVATDAVQTAIAGRTRYQQQTIRMFGLPESGLADTLRDAEKTVADFDRLEITTCLRRGELEIVTRFEPRDTATYAALEGLLRDRHAREIFSTDGALVDDQIAELLAGRSIATAESCTAGMLAARLTERAGSSAYVAGGVVAYSNAAKTELLGVDAGLIERHGAVSEPVAEAMAAGALQRFGADTAVAITGIAGPGGGTPTKPVGTVCFSVALAGGASVTRATRLPGNRSDIRERSTTVAMHLLRRALTGGG.

The protein belongs to the CinA family.

The sequence is that of CinA-like protein from Mycolicibacterium vanbaalenii (strain DSM 7251 / JCM 13017 / BCRC 16820 / KCTC 9966 / NRRL B-24157 / PYR-1) (Mycobacterium vanbaalenii).